The sequence spans 62 residues: Sperm protamine P1 (62 aa).

Residues 1 to 62 (MARCRRHSRS…RYSRRGRRRY (62 aa)) are disordered.

Belongs to the protamine P1 family. As to expression, testis.

The protein resides in the nucleus. Its subcellular location is the chromosome. In terms of biological role, protamines substitute for histones in the chromatin of sperm during the haploid phase of spermatogenesis. They compact sperm DNA into a highly condensed, stable and inactive complex. This is Sperm protamine P1 (PRM1) from Planigale maculata sinualis (Common planigale).